A 197-amino-acid chain; its full sequence is FMN-dependent NADH:quinone oxidoreductase (197 aa).

FMN contacts are provided by residues S10, 16 to 18, 93 to 96, and 137 to 140; these read SQS, MYNF, and TRGG.

The protein belongs to the azoreductase type 1 family. As to quaternary structure, homodimer. FMN serves as cofactor.

The catalysed reaction is 2 a quinone + NADH + H(+) = 2 a 1,4-benzosemiquinone + NAD(+). The enzyme catalyses N,N-dimethyl-1,4-phenylenediamine + anthranilate + 2 NAD(+) = 2-(4-dimethylaminophenyl)diazenylbenzoate + 2 NADH + 2 H(+). Quinone reductase that provides resistance to thiol-specific stress caused by electrophilic quinones. In terms of biological role, also exhibits azoreductase activity. Catalyzes the reductive cleavage of the azo bond in aromatic azo compounds to the corresponding amines. In Shewanella loihica (strain ATCC BAA-1088 / PV-4), this protein is FMN-dependent NADH:quinone oxidoreductase.